The following is a 544-amino-acid chain: MSAKEIIFSTEVRDRLLRGVELLNNAVKVTLGPKGRNVVIDRSYGAPRITKDGVSVAKEIELEDKFENMGAQMVREVASKTNDLAGDGTTTATVLAASIFREGAKLVAAGMNPMDLKRGIDLAVTAVLAEIKLRATKVNSSSEIAQVGTIAANGDASVGEMIAGAMEKVGNEGVITVEEARTADTELDVVEGMQFDRGYLSPYFVTNAEKMRVELDDPYILIHEKKLGNLQTMLPILEAVVQSGKPLLIISEDVEGEALTTLVVNKLRGGLKIAAVKSPGFGDRRKAMLQDIAVLTAGQMISEDIGIKLENVTLDMLGRARRVLIEKDTTTIIDGSGDKASIQACISQIKAQIEETTSDYDKEKLQERLAKLTGGVAVIRVGGATELEVKEKKDRIDDALNATRAAVEEGIVAGGGVALLRAKSALASLTGENPEITAGIAIVRKALEAPIRQIADNAGVEGSIVIGKLVDSSDQNQGFDAQTETYVDMIKAGIVDPAKVVRTALRDAGSIAALLITAEAMVADIPEKNAAQNAGNGAMGGRGY.

ATP is bound by residues 30–33 (TLGP), Lys-51, 87–91 (DGTTT), Gly-415, and Asp-496.

It belongs to the chaperonin (HSP60) family. In terms of assembly, forms a cylinder of 14 subunits composed of two heptameric rings stacked back-to-back. Interacts with the co-chaperonin GroES.

Its subcellular location is the cytoplasm. The enzyme catalyses ATP + H2O + a folded polypeptide = ADP + phosphate + an unfolded polypeptide.. Together with its co-chaperonin GroES, plays an essential role in assisting protein folding. The GroEL-GroES system forms a nano-cage that allows encapsulation of the non-native substrate proteins and provides a physical environment optimized to promote and accelerate protein folding. The polypeptide is Chaperonin GroEL 4 (Sinorhizobium medicae (strain WSM419) (Ensifer medicae)).